A 264-amino-acid polypeptide reads, in one-letter code: Sexual differentiation protein ste4 (264 aa).

One can recognise an SAM domain in the interval 11-73 (WNNEAVCNWI…LSAIQSMKKQ (63 aa)). Residues 111–139 (LEKRVEYLETENTKLVKTLNSLNSEFLQL) are leucine-zipper. Positions 176 to 264 (GSFDLEVNDS…PSFVLSRRSC (89 aa)) constitute a Ras-associating domain.

As to quaternary structure, homodimer or heterodimer with another leucine-zipper protein.

Essential for mating and meiosis. In Schizosaccharomyces pombe (strain 972 / ATCC 24843) (Fission yeast), this protein is Sexual differentiation protein ste4 (ste4).